The primary structure comprises 118 residues: Small ribosomal subunit protein uS17 (118 aa).

Belongs to the universal ribosomal protein uS17 family. In terms of assembly, part of the 30S ribosomal subunit.

Its function is as follows. One of the primary rRNA binding proteins, it binds specifically to the 5'-end of 16S ribosomal RNA. The sequence is that of Small ribosomal subunit protein uS17 from Methanopyrus kandleri (strain AV19 / DSM 6324 / JCM 9639 / NBRC 100938).